Here is a 72-residue protein sequence, read N- to C-terminus: Large ribosomal subunit protein bL31 (72 aa).

Positions 16, 18, 38, and 41 each coordinate Zn(2+).

This sequence belongs to the bacterial ribosomal protein bL31 family. Type A subfamily. Part of the 50S ribosomal subunit. The cofactor is Zn(2+).

In terms of biological role, binds the 23S rRNA. This Beutenbergia cavernae (strain ATCC BAA-8 / DSM 12333 / CCUG 43141 / JCM 11478 / NBRC 16432 / NCIMB 13614 / HKI 0122) protein is Large ribosomal subunit protein bL31.